A 101-amino-acid chain; its full sequence is Small ribosomal subunit protein uS14 (101 aa).

Belongs to the universal ribosomal protein uS14 family. As to quaternary structure, part of the 30S ribosomal subunit. Contacts proteins S3 and S10.

In terms of biological role, binds 16S rRNA, required for the assembly of 30S particles and may also be responsible for determining the conformation of the 16S rRNA at the A site. In Polaromonas naphthalenivorans (strain CJ2), this protein is Small ribosomal subunit protein uS14.